The chain runs to 122 residues: UPF0738 protein YjbL (122 aa).

The protein belongs to the UPF0738 family.

This is UPF0738 protein YjbL (yjbL) from Bacillus subtilis (strain 168).